The primary structure comprises 410 residues: MAKRQLLMLGIRTSFHTIAAVLVAGLIFTAVFLSRNSLPKENPQSHGVTDRGGDSGRECNLFEGKWVFDNVSYPLYKEEDCKFMSDQLACEKFGRKDLSYKFWRWQPHTCDLPRFNGTKLLERLRNKRMVYVGDSLNRGQWVSMVCMVSSVITNPKAMYMHNNGSNLITFKALEYNATIDYYWAPLLVESNSDDPTNHRFPDRIVRIQSIEKHARHWTNSDIIVFNSYLWWRMPHIKSLWGSFEKLDGIYKEVEMVRVYEMALQTLSQWLEVHVNPNITKLFFMSMSPTHERAEEWGGILNQNCYGEASLIDKEGYTGRGSDPKMMRVLENVLDGLKNRGLNMQMINITQLSEYRKEGHPSIYRKQWGTVKENEISNPSSNADCIHWCLPGVPDVWNELLYAYILDHHSS.

Residues 13–33 (TSFHTIAAVLVAGLIFTAVFL) form a helical; Signal-anchor for type II membrane protein membrane-spanning segment. The GDS motif signature appears at 133–135 (GDS). The short motif at 383 to 397 (DCIHWCLPGVPDVWN) is the DCXHWCLPGXXDXWN motif element.

It belongs to the PC-esterase family. TBL subfamily.

Its subcellular location is the golgi apparatus membrane. Functionally, may act as a bridging protein that binds pectin and other cell wall polysaccharides. Probably involved in maintaining esterification of pectins. May be involved in the specific O-acetylation of cell wall polymers. The chain is Protein trichome birefringence-like 34 (TBL34) from Arabidopsis thaliana (Mouse-ear cress).